Here is a 154-residue protein sequence, read N- to C-terminus: Transcriptional repressor NrdR (154 aa).

Residues 3–34 fold into a zinc finger; sequence CPFCTHPDTRVADSRLMEERNAVRRRRHCPNC. One can recognise an ATP-cone domain in the interval 49-139; the sequence is PAVIGPDKKR…LHKRFDNPAD (91 aa).

Belongs to the NrdR family. The cofactor is Zn(2+).

In terms of biological role, negatively regulates transcription of bacterial ribonucleotide reductase nrd genes and operons by binding to NrdR-boxes. The sequence is that of Transcriptional repressor NrdR from Neisseria meningitidis serogroup A / serotype 4A (strain DSM 15465 / Z2491).